The chain runs to 1638 residues: Chromatin-remodeling ATPase INO80 (1638 aa).

The tract at residues 41–93 (SLRKPLSSDEETDDEHVVKREHDVQDSDDSSTVGVVRMKQSSKRKSRLLASKE) is disordered. Phosphoserine is present on residues Ser-47 and Ser-48. Phosphothreonine is present on Thr-52. The span at 55 to 65 (EHVVKREHDVQ) shows a compositional bias: basic and acidic residues. 2 positions are modified to phosphoserine: Ser-67 and Ser-70. A coiled-coil region spans residues 136 to 161 (VQQLLREHVREQRQRKNYYKKAANAQ). The segment at 201-259 (RLAEAQAGPKPPKQRRRGRKKRDNMGSPESGEVPPSELGKYTFGDTLPNNEDDDEDGGE) is disordered. Positions 212–222 (PKQRRRGRKKR) are enriched in basic residues. Ser-227 and Ser-230 each carry phosphoserine. A compositionally biased stretch (acidic residues) spans 250–259 (NEDDDEDGGE). A DBINO domain is found at 313–438 (IWQIMSKKES…AHFMSKKLGQ (126 aa)). The segment at 499-528 (KEKEEEEQAQESVEDIKPEPRPEMKDLPQP) is disordered. Over residues 502–511 (EEEEQAQESV) the composition is skewed to acidic residues. Over residues 512 to 526 (EDIKPEPRPEMKDLP) the composition is skewed to basic and acidic residues. The Helicase ATP-binding domain maps to 547-718 (ANIYDQGISG…WALLHFIMPT (172 aa)). Residue 560–567 (DEMGLGKT) coordinates ATP. The region spanning 1160–1315 (VLDNLLTRLK…GGNFKPDTLK (156 aa)) is the Helicase C-terminal domain. 2 disordered regions span residues 1335-1364 (QEAK…DVNM) and 1463-1638 (FLDD…VGPE). The segment covering 1338 to 1350 (KLQSSSPIPAATQ) has biased composition (polar residues). Residues 1473 to 1495 (MRRRHHPRGTRRGRPRGSTRRGG) show a composition bias toward basic residues. Low complexity-rich tracts occupy residues 1505–1534 (TPTQ…GTSS) and 1618–1627 (SPATSRAPSP).

The protein belongs to the SNF2/RAD54 helicase family. Component of the chromatin remodeling Ino80 complex.

The protein localises to the nucleus. The catalysed reaction is ATP + H2O = ADP + phosphate + H(+). ATPase component of the chromatin remodeling INO80 complex which is involved in transcriptional regulation, DNA replication and DNA repair. Binds DNA. As part of the INO80 complex, remodels chromatin by shifting nucleosomes. The protein is Chromatin-remodeling ATPase INO80 of Drosophila melanogaster (Fruit fly).